A 358-amino-acid chain; its full sequence is Photosystem II protein D1 3 (358 aa).

Helical transmembrane passes span 28-45 (YIGWFGVLMIPCLLAATT), 117-132 (HFLIGISAYMGRQWEL), and 141-155 (WICVAYSAPLSAAMA). Histidine 117 contributes to the chlorophyll a binding site. Tyrosine 125 contacts pheophytin a. Residues aspartate 169 and glutamate 188 each contribute to the [CaMn4O5] cluster site. Residues 196-217 (FHMLGVAGVFGGSLFSAMHGSL) traverse the membrane as a helical segment. Histidine 197 serves as a coordination point for chlorophyll a. Residues histidine 214 and 263–264 (SF) each bind a quinone. A Fe cation-binding site is contributed by histidine 214. Histidine 271 contacts Fe cation. The helical transmembrane segment at 273 to 287 (LLGAWPVVGIWFTSM) threads the bilayer. 4 residues coordinate [CaMn4O5] cluster: histidine 331, glutamate 332, aspartate 341, and alanine 343. Residues 344–358 (TVESTPVALQAPAIG) constitute a propeptide that is removed on maturation.

This sequence belongs to the reaction center PufL/M/PsbA/D family. PSII is composed of 1 copy each of membrane proteins PsbA, PsbB, PsbC, PsbD, PsbE, PsbF, PsbH, PsbI, PsbJ, PsbK, PsbL, PsbM, PsbT, PsbX, PsbY, PsbZ, Psb30/Ycf12, peripheral proteins PsbO, CyanoQ (PsbQ), PsbU, PsbV and a large number of cofactors. It forms dimeric complexes. The D1/D2 heterodimer binds P680, chlorophylls that are the primary electron donor of PSII, and subsequent electron acceptors. It shares a non-heme iron and each subunit binds pheophytin, quinone, additional chlorophylls, carotenoids and lipids. D1 provides most of the ligands for the Mn4-Ca-O5 cluster of the oxygen-evolving complex (OEC). There is also a Cl(-1) ion associated with D1 and D2, which is required for oxygen evolution. The PSII complex binds additional chlorophylls, carotenoids and specific lipids. serves as cofactor. Post-translationally, tyr-160 forms a radical intermediate that is referred to as redox-active TyrZ, YZ or Y-Z. In terms of processing, C-terminally processed by CtpA; processing is essential to allow assembly of the oxygen-evolving complex and thus photosynthetic growth.

It localises to the cellular thylakoid membrane. It catalyses the reaction 2 a plastoquinone + 4 hnu + 2 H2O = 2 a plastoquinol + O2. Photosystem II (PSII) is a light-driven water:plastoquinone oxidoreductase that uses light energy to abstract electrons from H(2)O, generating O(2) and a proton gradient subsequently used for ATP formation. It consists of a core antenna complex that captures photons, and an electron transfer chain that converts photonic excitation into a charge separation. The D1/D2 (PsbA/PsbD) reaction center heterodimer binds P680, the primary electron donor of PSII as well as several subsequent electron acceptors. In Synechococcus sp. (strain CC9311), this protein is Photosystem II protein D1 3.